The following is a 138-amino-acid chain: Putative pre-16S rRNA nuclease (138 aa).

The protein belongs to the YqgF nuclease family.

The protein localises to the cytoplasm. Functionally, could be a nuclease involved in processing of the 5'-end of pre-16S rRNA. This Porphyromonas gingivalis (strain ATCC BAA-308 / W83) protein is Putative pre-16S rRNA nuclease.